Consider the following 158-residue polypeptide: RNA pyrophosphohydrolase (158 aa).

One can recognise a Nudix hydrolase domain in the interval 8–152 (PYRPCAGVML…KRALYRGLIE (145 aa)). The Nudix box signature appears at 42 to 63 (GGIDEGEDAEKAAIRELGEETG).

This sequence belongs to the Nudix hydrolase family. RppH subfamily. A divalent metal cation is required as a cofactor.

Functionally, accelerates the degradation of transcripts by removing pyrophosphate from the 5'-end of triphosphorylated RNA, leading to a more labile monophosphorylated state that can stimulate subsequent ribonuclease cleavage. This chain is RNA pyrophosphohydrolase, found in Sphingopyxis alaskensis (strain DSM 13593 / LMG 18877 / RB2256) (Sphingomonas alaskensis).